The sequence spans 21 residues: thr operon leader peptide (21 aa).

The protein belongs to the thr operon leader peptide family.

This protein is involved in control of the biosynthesis of threonine. In Shigella boydii serotype 18 (strain CDC 3083-94 / BS512), this protein is thr operon leader peptide.